A 215-amino-acid chain; its full sequence is Nucleoredoxin-like protein 1 (215 aa).

Residues 1–164 (MVDLFLGKVL…GAELIDRNFM (164 aa)) form the Thioredoxin; atypical domain. The interval 190 to 215 (DEKKKKKKRDDDDDDDDGGGGGGPWG) is disordered.

The protein belongs to the nucleoredoxin family.

It is found in the cell projection. It localises to the cilium. The protein localises to the photoreceptor outer segment. Functionally, plays an important role in retinal cone photoreceptor survival. May play a role in cone cell viability, slowing down cone degeneration, does not seem to play a role in degenerating rods. This is Nucleoredoxin-like protein 1 (nxnl1) from Danio rerio (Zebrafish).